Here is a 377-residue protein sequence, read N- to C-terminus: Succinyl-diaminopimelate desuccinylase (377 aa).

His71 is a binding site for Zn(2+). The active site involves Asp73. Zn(2+) is bound at residue Asp102. The active-site Proton acceptor is the Glu132. Glu133, Glu161, and His346 together coordinate Zn(2+).

It belongs to the peptidase M20A family. DapE subfamily. In terms of assembly, homodimer. Zn(2+) serves as cofactor. Co(2+) is required as a cofactor.

The catalysed reaction is N-succinyl-(2S,6S)-2,6-diaminopimelate + H2O = (2S,6S)-2,6-diaminopimelate + succinate. Its pathway is amino-acid biosynthesis; L-lysine biosynthesis via DAP pathway; LL-2,6-diaminopimelate from (S)-tetrahydrodipicolinate (succinylase route): step 3/3. Functionally, catalyzes the hydrolysis of N-succinyl-L,L-diaminopimelic acid (SDAP), forming succinate and LL-2,6-diaminopimelate (DAP), an intermediate involved in the bacterial biosynthesis of lysine and meso-diaminopimelic acid, an essential component of bacterial cell walls. This Rhizorhabdus wittichii (strain DSM 6014 / CCUG 31198 / JCM 15750 / NBRC 105917 / EY 4224 / RW1) (Sphingomonas wittichii) protein is Succinyl-diaminopimelate desuccinylase.